Consider the following 462-residue polypeptide: Metal cation symporter ZIP8 (462 aa).

An N-terminal signal peptide occupies residues 1–19 (MAPGRAVAGLLLLAATSLG). The Extracellular segment spans residues 20-132 (HPSEGPELAF…PSLSEVWGYG (113 aa)). 3 N-linked (GlcNAc...) asparagine glycosylation sites follow: N40, N88, and N96. Residues 133-153 (FLSVTIINLASLLGLILTPLI) traverse the membrane as a helical segment. At 154 to 160 (KKSYFPK) the chain is on the cytoplasmic side. The helical transmembrane segment at 161 to 181 (ILTYFVGLAIGTLFSNAIFQL) threads the bilayer. The Extracellular segment spans residues 182–191 (IPEAFGFNPK). Residues 192 to 212 (IDNYVEKAVAVFGGFYMLFFV) form a helical membrane-spanning segment. Over 213-367 (ERTLKMLLKT…LNAGMSTRQA (155 aa)) the chain is Cytoplasmic. The short motif at 345–350 (EEFPHE) is the XEXPHE-motif element. The helical transmembrane segment at 368–388 (LLFNFLSACSCYVGLAFGILV) threads the bilayer. The Extracellular segment spans residues 389-390 (GN). Residues 391–411 (NFAPNIIFALAGGMFLYISLA) form a helical membrane-spanning segment. Residues 412 to 431 (DMFPEMNDMLREKVTGRQTD) lie on the Cytoplasmic side of the membrane. The helical transmembrane segment at 432–452 (FTFFMIQNAGMLTGFTAILLI) threads the bilayer. The Extracellular segment spans residues 453 to 462 (TLYAGDIELQ).

It belongs to the ZIP transporter (TC 2.A.5) family. Homodimer. N-glycosylated. N-glycosylation is not required for proper iron and zinc transport. Ubiquitously expressed.

It is found in the cell membrane. The protein localises to the apical cell membrane. Its subcellular location is the basolateral cell membrane. The protein resides in the lysosome membrane. The catalysed reaction is Zn(2+)(out) + 2 hydrogencarbonate(out) = Zn(2+)(in) + 2 hydrogencarbonate(in). It catalyses the reaction selenite(out) + Zn(2+)(out) + hydrogencarbonate(out) = selenite(in) + Zn(2+)(in) + hydrogencarbonate(in). The enzyme catalyses Mn(2+)(out) + 2 hydrogencarbonate(out) = Mn(2+)(in) + 2 hydrogencarbonate(in). It carries out the reaction Cd(2+)(out) + 2 hydrogencarbonate(out) = Cd(2+)(in) + 2 hydrogencarbonate(in). The catalysed reaction is Fe(2+)(out) + 2 hydrogencarbonate(out) = Fe(2+)(in) + 2 hydrogencarbonate(in). It catalyses the reaction Co(2+)(out) + 2 hydrogencarbonate(out) = Co(2+)(in) + 2 hydrogencarbonate(in). Functionally, electroneutral divalent metal cation:bicarbonate symporter of the plasma membrane mediating the cellular uptake of zinc and manganese, two divalent metal cations important for development, tissue homeostasis and immunity. Transports an electroneutral complex composed of a divalent metal cation and two bicarbonate anions or alternatively a bicarbonate and a selenite anion. Thereby, it also contributes to the cellular uptake of selenium, an essential trace metal and micronutrient. Also imports cadmium a non-essential metal which is cytotoxic and carcinogenic. May also transport iron and cobalt through membranes. Through zinc import, indirectly regulates the metal-dependent transcription factor MTF1 and the expression of some metalloproteases involved in cartilage catabolism and also probably heart development. Also indirectly regulates the expression of proteins involved in cell morphology and cytoskeleton organization. Indirectly controls innate immune function and inflammatory response by regulating zinc cellular uptake which in turn modulates the expression of genes specific of these processes. Protects, for instance, cells from injury and death at the onset of inflammation. By regulating zinc influx into monocytes also directly modulates their adhesion to endothelial cells and arteries. Reclaims manganese from the bile at the apical membrane of hepatocytes, thereby regulating the activity of the manganese-dependent enzymes through the systemic levels of the nutrient. Also participates in manganese reabsorption in the proximal tubule of the kidney. By mediating the extracellular uptake of manganese by cells of the blood-brain barrier, may also play a role in the transport of the micronutrient to the brain. With manganese cellular uptake also participates in mitochondrial proper function. Finally, also probably functions intracellularly, translocating zinc from lysosome to cytosol to indirectly enhance the expression of specific genes during TCR-mediated T cell activation. The chain is Metal cation symporter ZIP8 from Mus musculus (Mouse).